Consider the following 133-residue polypeptide: Triatox (133 aa).

Positions 1 to 22 are cleaved as a signal peptide; it reads MTTLRVLLAVCCAAYCILAEDV. Positions 23 to 125 constitute a CUB domain; the sequence is TVPANGELKL…RAMCTVYSAE (103 aa). A disulfide bridge links cysteine 70 with cysteine 86.

It belongs to the venom CUB family. As to expression, expressed by the venom gland.

Its subcellular location is the secreted. May function as an antimicrobial peptide and may be related to the innate defense of the insect in the salivary glands. This Triatoma infestans (Assassin bug) protein is Triatox.